Here is a 350-residue protein sequence, read N- to C-terminus: Nicotinate-nucleotide--dimethylbenzimidazole phosphoribosyltransferase (350 aa).

Catalysis depends on Glu-316, which acts as the Proton acceptor.

It belongs to the CobT family.

The catalysed reaction is 5,6-dimethylbenzimidazole + nicotinate beta-D-ribonucleotide = alpha-ribazole 5'-phosphate + nicotinate + H(+). Its pathway is nucleoside biosynthesis; alpha-ribazole biosynthesis; alpha-ribazole from 5,6-dimethylbenzimidazole: step 1/2. Its function is as follows. Catalyzes the synthesis of alpha-ribazole-5'-phosphate from nicotinate mononucleotide (NAMN) and 5,6-dimethylbenzimidazole (DMB). The chain is Nicotinate-nucleotide--dimethylbenzimidazole phosphoribosyltransferase from Pseudomonas savastanoi pv. phaseolicola (strain 1448A / Race 6) (Pseudomonas syringae pv. phaseolicola (strain 1448A / Race 6)).